We begin with the raw amino-acid sequence, 281 residues long: Predicted GPI-anchored protein 39 (281 aa).

A signal peptide spans 1–18 (MKATTFTLLLSIATAINA). Disordered stretches follow at residues 52–94 (HHHG…SASV) and 106–227 (VSVS…SSSE). Composition is skewed to low complexity over residues 69 to 94 (SSSS…SASV), 106 to 158 (VSVS…STTD), 167 to 203 (ATDS…IEET), and 210 to 227 (SVPS…SSSE). An N-linked (GlcNAc...) asparagine glycan is attached at Asn-150. Residues Asn-239, Asn-246, Asn-249, and Asn-252 are each glycosylated (N-linked (GlcNAc...) asparagine). Ser-256 carries the GPI-anchor amidated serine lipid modification. Positions 257–281 (ANFAIQYGTDYGVAVVAAIVGALLI) are cleaved as a propeptide — removed in mature form.

The protein localises to the cell membrane. This Candida albicans (strain SC5314 / ATCC MYA-2876) (Yeast) protein is Predicted GPI-anchored protein 39 (PGA39).